A 509-amino-acid chain; its full sequence is FAD-linked oxidoreductase dpmaF (509 aa).

Residues 1-21 (MTRLSLQLIAGLAGQAWLVNS) form the signal peptide. The FAD-binding PCMH-type domain occupies 59-231 (LQYEPIAVAV…AEYGFETFPA (173 aa)). N-linked (GlcNAc...) asparagine glycans are attached at residues Asn125, Asn193, and Asn281.

It belongs to the oxygen-dependent FAD-linked oxidoreductase family. Requires FAD as cofactor.

The protein operates within secondary metabolite biosynthesis; terpenoid biosynthesis. Its function is as follows. FAD-linked oxidoreductase; part of the gene cluster that mediates the biosynthesis of the diterpenoid pyrones subglutinols A and B. The first step of the pathway is the synthesis of the alpha-pyrone moiety by the polyketide synthase dpmaA via condensation of one acetyl-CoA starter unit with 3 malonyl-CoA units and 2 methylations. The alpha-pyrone is then combined with geranylgeranyl pyrophosphate (GGPP) formed by the GGPP synthase dpmaD through the action of the prenyltransferase dpmaC to yield a linear alpha-pyrone diterpenoid. Subsequent steps in the diterpenoid pyrone biosynthetic pathway involve the decalin core formation, which is initiated by the epoxidation of the C10-C11 olefin by the FAD-dependent oxidoreductase dpmaE, and is followed by a cyclization cascade catalyzed by the terpene cyclase dpmaB. The dehydrogenase dpmaF is then involved in tetrahydrofuran (THF) ring formation at the C5 unit to complete the formation of subglutinols A and B. This Metarhizium anisopliae (Entomophthora anisopliae) protein is FAD-linked oxidoreductase dpmaF.